The following is a 155-amino-acid chain: Endoribonuclease YbeY (155 aa).

Residues His117, His121, and His127 each coordinate Zn(2+).

It belongs to the endoribonuclease YbeY family. Zn(2+) is required as a cofactor.

The protein resides in the cytoplasm. Functionally, single strand-specific metallo-endoribonuclease involved in late-stage 70S ribosome quality control and in maturation of the 3' terminus of the 16S rRNA. This Dichelobacter nodosus (strain VCS1703A) protein is Endoribonuclease YbeY.